The sequence spans 467 residues: Abscisic acid 8'-hydroxylase 1 (467 aa).

The helical transmembrane segment at 5–24 (ALFLTLFAGSLFLYFLRCLI) threads the bilayer. Residue C411 coordinates heme.

The protein belongs to the cytochrome P450 family. It depends on heme as a cofactor. Mainly expressed in flowers, siliques, roots and stems. Lower expression in rosette leaves and dry seeds. Expressed in vascular tissues of embryo during the seed development.

The protein localises to the membrane. The enzyme catalyses 2-cis-(+)-abscisate + reduced [NADPH--hemoprotein reductase] + O2 = (+)-8'-hydroxyabscisate + oxidized [NADPH--hemoprotein reductase] + H2O + H(+). Its pathway is plant hormone degradation; abscisic acid degradation. In terms of biological role, involved in the oxidative degradation of abscisic acid. Plays an important role in determining abscisic acid levels in dry seeds and in the control of postgermination growth. The polypeptide is Abscisic acid 8'-hydroxylase 1 (CYP707A1) (Arabidopsis thaliana (Mouse-ear cress)).